A 507-amino-acid polypeptide reads, in one-letter code: Histidine--tRNA ligase (507 aa).

The protein belongs to the class-II aminoacyl-tRNA synthetase family. Homodimer.

It localises to the cytoplasm. It carries out the reaction tRNA(His) + L-histidine + ATP = L-histidyl-tRNA(His) + AMP + diphosphate + H(+). This Rhizobium leguminosarum bv. trifolii (strain WSM2304) protein is Histidine--tRNA ligase.